A 276-amino-acid chain; its full sequence is Caspase-6 (276 aa).

Residues 1-5 (MTETD) constitute a propeptide that is removed on maturation. The segment at 25–27 (KRR) is tri-arginine exosite. S62 carries the post-translational modification Phosphoserine. The active site involves H104. A 130's region region spans residues 108–125 (NHVYAYDAKIEIQTLTGL). The active site involves C146. A propeptide spanning residues 163–175 (HQTDKLDNVTQVD) is cleaved from the precursor. S239 carries the post-translational modification Phosphoserine. Residues C246 and C259 are each lipidated (S-palmitoyl cysteine).

It belongs to the peptidase C14A family. As to quaternary structure, heterotetramer that consists of two anti-parallel arranged heterodimers, each one formed by a 18 kDa (p18) and a 11 kDa (p11) subunit. Interacts with BIRC6/bruce. Interacts with RIPK3. In terms of assembly, heterotetramer that consists of two anti-parallel arranged heterodimers, each one formed by a 18 kDa (Caspase-6 subunit p18) and a 11 kDa (Caspase-6 subunit p11) subunit. Post-translationally, phosphorylated by NUAK1; phosphorylation inhibits self-activation. Phosphorylation at Ser-239 by AMP-activated protein kinase (PRKAA1 or PRKAA2) inhibits autocleavage, preventing caspase activation, thereby preventing hepatocyte apoptosis. Palmitoylation by ZDHHC17 blocks dimerization and subsequent activation, leading to inhibit the cysteine protease activity. In terms of processing, can be cleaved and activated by different caspases, depending on the context. Cleaved and activated by caspase-8 (CASP8) and subsequently by caspase-3 (CASP3). Can also undergo autoactivation by mediating autocleavage at Asp-162 and Asp-175, while it is not able to cleave its N-terminal disordered prodomain. Cleaved and activated by CASP1, possibly in the context of inflammation. As to expression, highly expressed in lung, liver, kidney, testis, and heart. Lower levels in spleen, skeletal muscle and brain. Expressed in neurons.

The protein localises to the cytoplasm. The protein resides in the nucleus. The enzyme catalyses Strict requirement for Asp at position P1 and has a preferred cleavage sequence of Val-Glu-His-Asp-|-.. During activation, the N-terminal disordered prodomain is removed by cleavage. Concomitantly, double cleavage gives rise to a large 18-kDa and a small 11-kDa subunit. The two large and two small subunits then assemble to form the active CASP6 complex. Can be cleaved and activated by different caspases, depending on the context. Cleaved and activated by caspase-8 (CASP8) and subsequently by caspase-3 (CASP3). Can also undergo autoactivation by mediating autocleavage at Asp-162 and Asp-175, while it is not able to cleave its N-terminal disordered prodomain. Intramolecular cleavage at Asp-175 is a prerequisite for CASP6 self-activation. Cleaved and activated by CASP1 in neurons, possibly in the context of inflammation. Phosphorylation at Ser-239 inhibits autocleavage, preventing caspase activation. Its function is as follows. Cysteine protease that plays essential roles in programmed cell death, axonal degeneration, development and innate immunity. Acts as a non-canonical executioner caspase during apoptosis: localizes in the nucleus and cleaves the nuclear structural protein NUMA1 and lamin A/LMNA thereby inducing nuclear shrinkage and fragmentation. Lamin-A/LMNA cleavage is required for chromatin condensation and nuclear disassembly during apoptotic execution. Acts as a regulator of liver damage by promoting hepatocyte apoptosis: in absence of phosphorylation by AMP-activated protein kinase (AMPK), catalyzes cleavage of BID, leading to cytochrome c release, thereby participating in nonalcoholic steatohepatitis. Cleaves PARK7/DJ-1 in cells undergoing apoptosis. Involved in intrinsic apoptosis by mediating cleavage of RIPK1. Furthermore, cleaves many transcription factors such as NF-kappa-B and cAMP response element-binding protein/CREBBP. Cleaves phospholipid scramblase proteins XKR4 and XKR9. In addition to apoptosis, involved in different forms of programmed cell death. Plays an essential role in defense against viruses by acting as a central mediator of the ZBP1-mediated pyroptosis, apoptosis, and necroptosis (PANoptosis), independently of its cysteine protease activity. PANoptosis is a unique inflammatory programmed cell death, which provides a molecular scaffold that allows the interactions and activation of machinery required for inflammasome/pyroptosis, apoptosis and necroptosis. Mechanistically, interacts with RIPK3 and enhances the interaction between RIPK3 and ZBP1, leading to ZBP1-mediated inflammasome activation and cell death. Plays an essential role in axon degeneration during axon pruning which is the remodeling of axons during neurogenesis but not apoptosis. Regulates B-cell programs both during early development and after antigen stimulation. (Microbial infection) Proteolytically cleaves the N protein of coronaviruses. The cleavage leads to two fragments and modulates coronavirus replication by regulating IFN signaling. The two fragments produced by the cleavage interact with IRF3 inhibiting its nuclear translocation after activation and reduce the expression of IFNB and IFN-stimulated genes. This is Caspase-6 from Mus musculus (Mouse).